Reading from the N-terminus, the 204-residue chain is Methylthioribulose-1-phosphate dehydratase (204 aa).

2 residues coordinate Zn(2+): His94 and His96.

This sequence belongs to the aldolase class II family. MtnB subfamily. Zn(2+) serves as cofactor.

It catalyses the reaction 5-(methylsulfanyl)-D-ribulose 1-phosphate = 5-methylsulfanyl-2,3-dioxopentyl phosphate + H2O. It functions in the pathway amino-acid biosynthesis; L-methionine biosynthesis via salvage pathway; L-methionine from S-methyl-5-thio-alpha-D-ribose 1-phosphate: step 2/6. In terms of biological role, catalyzes the dehydration of methylthioribulose-1-phosphate (MTRu-1-P) into 2,3-diketo-5-methylthiopentyl-1-phosphate (DK-MTP-1-P). This is Methylthioribulose-1-phosphate dehydratase from Citrobacter koseri (strain ATCC BAA-895 / CDC 4225-83 / SGSC4696).